Here is a 196-residue protein sequence, read N- to C-terminus: ATP-dependent Clp protease proteolytic subunit (196 aa).

S96 (nucleophile) is an active-site residue. H121 is a catalytic residue.

The protein belongs to the peptidase S14 family. In terms of assembly, fourteen ClpP subunits assemble into 2 heptameric rings which stack back to back to give a disk-like structure with a central cavity, resembling the structure of eukaryotic proteasomes.

It localises to the cytoplasm. The catalysed reaction is Hydrolysis of proteins to small peptides in the presence of ATP and magnesium. alpha-casein is the usual test substrate. In the absence of ATP, only oligopeptides shorter than five residues are hydrolyzed (such as succinyl-Leu-Tyr-|-NHMec, and Leu-Tyr-Leu-|-Tyr-Trp, in which cleavage of the -Tyr-|-Leu- and -Tyr-|-Trp bonds also occurs).. Functionally, cleaves peptides in various proteins in a process that requires ATP hydrolysis. Has a chymotrypsin-like activity. Plays a major role in the degradation of misfolded proteins. This chain is ATP-dependent Clp protease proteolytic subunit, found in Streptococcus equi subsp. zooepidemicus (strain H70).